Reading from the N-terminus, the 87-residue chain is Small ribosomal subunit protein uS17 (87 aa).

It belongs to the universal ribosomal protein uS17 family. As to quaternary structure, part of the 30S ribosomal subunit.

In terms of biological role, one of the primary rRNA binding proteins, it binds specifically to the 5'-end of 16S ribosomal RNA. The polypeptide is Small ribosomal subunit protein uS17 (Macrococcus caseolyticus (strain JCSC5402) (Macrococcoides caseolyticum)).